Reading from the N-terminus, the 202-residue chain is Orotate phosphoribosyltransferase (202 aa).

113-121 (EDIITTGGS) lines the 5-phospho-alpha-D-ribose 1-diphosphate pocket. Orotate-binding residues include threonine 117 and arginine 145.

This sequence belongs to the purine/pyrimidine phosphoribosyltransferase family. PyrE subfamily. Homodimer. Mg(2+) is required as a cofactor.

It carries out the reaction orotidine 5'-phosphate + diphosphate = orotate + 5-phospho-alpha-D-ribose 1-diphosphate. The protein operates within pyrimidine metabolism; UMP biosynthesis via de novo pathway; UMP from orotate: step 1/2. Its function is as follows. Catalyzes the transfer of a ribosyl phosphate group from 5-phosphoribose 1-diphosphate to orotate, leading to the formation of orotidine monophosphate (OMP). This Nitratiruptor sp. (strain SB155-2) protein is Orotate phosphoribosyltransferase.